The chain runs to 498 residues: ATP synthase subunit beta, chloroplastic (498 aa).

172–179 (GGAGVGKT) serves as a coordination point for ATP.

This sequence belongs to the ATPase alpha/beta chains family. As to quaternary structure, F-type ATPases have 2 components, CF(1) - the catalytic core - and CF(0) - the membrane proton channel. CF(1) has five subunits: alpha(3), beta(3), gamma(1), delta(1), epsilon(1). CF(0) has four main subunits: a(1), b(1), b'(1) and c(9-12).

The protein localises to the plastid. The protein resides in the chloroplast thylakoid membrane. The catalysed reaction is ATP + H2O + 4 H(+)(in) = ADP + phosphate + 5 H(+)(out). Produces ATP from ADP in the presence of a proton gradient across the membrane. The catalytic sites are hosted primarily by the beta subunits. The chain is ATP synthase subunit beta, chloroplastic from Nicotiana rustica (Aztec tobacco).